Reading from the N-terminus, the 346-residue chain is Putative cytochrome bd menaquinol oxidase subunit II (346 aa).

The next 9 helical transmembrane spans lie at 7 to 27, 63 to 83, 87 to 107, 119 to 139, 164 to 184, 201 to 221, 236 to 256, 269 to 289, and 312 to 332; these read ALIA…MATM, VFIV…TFVL, LLIP…FLVF, YISG…LPVT, AYSF…LLLA, KSAL…MVTM, FSWI…LFLP, LALV…GRAH, and ALFA…FFFW.

Belongs to the cytochrome ubiquinol oxidase subunit 2 family.

The protein resides in the cell membrane. May have a role in sporulation. Can compensate for the loss of cytochrome aa3. This is Putative cytochrome bd menaquinol oxidase subunit II (ythB) from Bacillus subtilis (strain 168).